We begin with the raw amino-acid sequence, 463 residues long: T-box transcription factor TBX1-A (463 aa).

2 disordered regions span residues 39–58 (SPSP…PCSA) and 75–104 (GASS…VKKN). Positions 75–96 (GASSSSCASSTPGSGSTGSSSS) are enriched in low complexity. The segment at residues 119–297 (LWDEFNQLGT…SNPFAKGFRD (179 aa)) is a DNA-binding region (T-box). 2 disordered regions span residues 320–354 (RSRN…PLHG) and 377–409 (VPLS…PYKY). The segment covering 323 to 332 (NPVSSPTQNG) has biased composition (polar residues). A compositionally biased stretch (basic and acidic residues) spans 333-347 (SDKDGDGRREYERDA). The short motif at 420-431 (KTRPAPYPLPTI) is the Nuclear localization signal element.

In terms of assembly, binds DNA as a dimer. Interacts with dscr6/ripply3.

The protein resides in the nucleus. Functionally, probable transcriptional regulator involved in developmental processes. Binds to the palindromic T site 5'-TTCACACCTAGGTGTGAA-3' DNA sequence. Induces pre-placodal ectoderm (PPE) gene expression in regions where RIPPLY3 is absent. Plays a role in the formation of the anteroposterior (AP) axis during embryonic development; required to establish the posterolateral border of the pre-placodal ectoderm (PPE) acting downstream of the retinoic acid receptor (RAR) signaling. In Xenopus laevis (African clawed frog), this protein is T-box transcription factor TBX1-A (tbx1-a).